Consider the following 91-residue polypeptide: Acylphosphatase (91 aa).

One can recognise an Acylphosphatase-like domain in the interval 5-91 (RLTAWVRGHV…RGSFTGFEER (87 aa)). Catalysis depends on residues Arg20 and Asn38.

This sequence belongs to the acylphosphatase family.

It catalyses the reaction an acyl phosphate + H2O = a carboxylate + phosphate + H(+). The protein is Acylphosphatase (acyP) of Thermobifida fusca (strain YX).